Here is a 255-residue protein sequence, read N- to C-terminus: Acetylglutamate kinase (255 aa).

Substrate contacts are provided by residues 40 to 41 (GG), R62, and N153.

The protein belongs to the acetylglutamate kinase family. ArgB subfamily.

Its subcellular location is the cytoplasm. It carries out the reaction N-acetyl-L-glutamate + ATP = N-acetyl-L-glutamyl 5-phosphate + ADP. It participates in amino-acid biosynthesis; L-arginine biosynthesis; N(2)-acetyl-L-ornithine from L-glutamate: step 2/4. Its function is as follows. Catalyzes the ATP-dependent phosphorylation of N-acetyl-L-glutamate. The polypeptide is Acetylglutamate kinase (Bacillus cereus (strain AH187)).